Consider the following 288-residue polypeptide: Protoheme IX farnesyltransferase (288 aa).

9 helical membrane passes run 6-26 (VILYLLEVLKPKIILGNLLSL), 44-64 (FLDSLSLFLIVGSACVLNNVI), 89-109 (LAILIAMFMLFLGLILCVKFI), 111-131 (VVCFCLFLLGWLTYIFLYSFF), 138-158 (ISTIVGSISGSLPPIVGYCSV), 169-189 (LLIMFALWQIPHSYAICILHF), 213-233 (IILHIILFFISVIVLTFINSI), 238-258 (LIISFFLCLTWLYYSLLELTI), and 268-288 (IFRWSIIVIFLLNIIMLFGFV).

The protein belongs to the UbiA prenyltransferase family. Protoheme IX farnesyltransferase subfamily.

It is found in the cell membrane. It carries out the reaction heme b + (2E,6E)-farnesyl diphosphate + H2O = Fe(II)-heme o + diphosphate. Its pathway is porphyrin-containing compound metabolism; heme O biosynthesis; heme O from protoheme: step 1/1. Functionally, converts heme B (protoheme IX) to heme O by substitution of the vinyl group on carbon 2 of heme B porphyrin ring with a hydroxyethyl farnesyl side group. This Buchnera aphidicola subsp. Baizongia pistaciae (strain Bp) protein is Protoheme IX farnesyltransferase.